The chain runs to 225 residues: Large ribosomal subunit protein uL1 (225 aa).

It belongs to the universal ribosomal protein uL1 family. Part of the 50S ribosomal subunit.

Its function is as follows. Binds directly to 23S rRNA. Probably involved in E site tRNA release. In terms of biological role, protein L1 is also a translational repressor protein, it controls the translation of its operon by binding to its mRNA. This Thermofilum pendens (strain DSM 2475 / Hrk 5) protein is Large ribosomal subunit protein uL1.